A 269-amino-acid polypeptide reads, in one-letter code: uncharacterized protein (269 aa).

Residues 181–191 (QKKELSPHEIA) show a composition bias toward basic and acidic residues. The segment at 181 to 203 (QKKELSPHEIAESPSSHSTSPMG) is disordered. Polar residues predominate over residues 193–202 (SPSSHSTSPM). Serine 200 bears the Phosphoserine mark.

This is an uncharacterized protein from Schizosaccharomyces pombe (strain 972 / ATCC 24843) (Fission yeast).